The following is a 222-amino-acid chain: MGQKVHPKGFRLGIIKDWDSRWFANDKDFEKYLLEDYKIRRHIKEKLYNAGISRIEIERAAKRIKVIIHTAKPGIVIGRAGSGVEALRKELEKITGGKTISLDIKEIKVPELDAQLVAENIAAQLEKRVSFRKAMKQAMARALRSGAKGIKTMVSGRLGGADIARTEWYKEGRIPLQTLRADIDYGFAEAHTTYGRIGVKTWIYKGDVLPQKGAAAEKGGDK.

In terms of domain architecture, KH type-2 spans 39–108; sequence IRRHIKEKLY…TISLDIKEIK (70 aa).

It belongs to the universal ribosomal protein uS3 family. In terms of assembly, part of the 30S ribosomal subunit. Forms a tight complex with proteins S10 and S14.

In terms of biological role, binds the lower part of the 30S subunit head. Binds mRNA in the 70S ribosome, positioning it for translation. In Caldicellulosiruptor saccharolyticus (strain ATCC 43494 / DSM 8903 / Tp8T 6331), this protein is Small ribosomal subunit protein uS3.